The primary structure comprises 380 residues: Histidinol-phosphate aminotransferase (380 aa).

N6-(pyridoxal phosphate)lysine is present on lysine 235.

The protein belongs to the class-II pyridoxal-phosphate-dependent aminotransferase family. Histidinol-phosphate aminotransferase subfamily. In terms of assembly, homodimer. It depends on pyridoxal 5'-phosphate as a cofactor.

The catalysed reaction is L-histidinol phosphate + 2-oxoglutarate = 3-(imidazol-4-yl)-2-oxopropyl phosphate + L-glutamate. Its pathway is amino-acid biosynthesis; L-histidine biosynthesis; L-histidine from 5-phospho-alpha-D-ribose 1-diphosphate: step 7/9. This is Histidinol-phosphate aminotransferase from Rhodococcus jostii (strain RHA1).